The chain runs to 453 residues: Acyl-coenzyme A thioesterase 2, mitochondrial (453 aa).

The transit peptide at Met1 to Thr42 directs the protein to the mitochondrion. Lys83 bears the N6-acetyllysine mark. Residues Ser273, Asp365, and His399 each act as charge relay system in the active site. Lys447 carries the post-translational modification N6-succinyllysine.

This sequence belongs to the C/M/P thioester hydrolase family. In terms of assembly, monomer. Highly expressed in brown and white adipose tissue, muscle, heart, kidney, lung, adrenal gland and spleen; weakly expressed in intestine, testis and brain.

It is found in the mitochondrion matrix. It catalyses the reaction hexadecanoyl-CoA + H2O = hexadecanoate + CoA + H(+). It carries out the reaction tetradecanoyl-CoA + H2O = tetradecanoate + CoA + H(+). The catalysed reaction is octadecanoyl-CoA + H2O = octadecanoate + CoA + H(+). The enzyme catalyses eicosanoyl-CoA + H2O = eicosanoate + CoA + H(+). It catalyses the reaction decanoyl-CoA + H2O = decanoate + CoA + H(+). It carries out the reaction dodecanoyl-CoA + H2O = dodecanoate + CoA + H(+). The catalysed reaction is (9Z)-octadecenoyl-CoA + H2O = (9Z)-octadecenoate + CoA + H(+). The enzyme catalyses (9Z)-hexadecenoyl-CoA + H2O = (9Z)-hexadecenoate + CoA + H(+). It catalyses the reaction (9E)-octadecenoyl-CoA + H2O = (9E)-octadecenoate + CoA + H(+). It carries out the reaction (9Z,12Z)-octadecadienoyl-CoA + H2O = (9Z,12Z)-octadecadienoate + CoA + H(+). It functions in the pathway lipid metabolism; fatty acid metabolism. Its function is as follows. Catalyzes the hydrolysis of acyl-CoAs into free fatty acids and coenzyme A (CoASH), regulating their respective intracellular levels. Displays higher activity toward long chain acyl CoAs (C14-C20). The enzyme is involved in enhancing the hepatic fatty acid oxidation in mitochondria. The chain is Acyl-coenzyme A thioesterase 2, mitochondrial (Acot2) from Mus musculus (Mouse).